Here is a 767-residue protein sequence, read N- to C-terminus: Actin filament-associated protein 1-like 1 (767 aa).

Over residues 83 to 97 the composition is skewed to basic and acidic residues; the sequence is LRDMSDDGERSKEAS. The disordered stretch occupies residues 83-145; the sequence is LRDMSDDGER…KSPEYISSHN (63 aa). Phosphoserine occurs at positions 87, 93, 97, 103, and 152. The span at 164-173 shows a compositional bias: polar residues; that stretch reads SYPTTRMNGE. Residues 164-210 form a disordered region; the sequence is SYPTTRMNGESKSSYNDSDAMSSSYESYDEEEEEEKGRQPKHQWPSE. Over residues 174-189 the composition is skewed to low complexity; it reads SKSSYNDSDAMSSSYE. The 97-residue stretch at 219-315 folds into the PH 1 domain; that stretch reads DCRICAFLLR…WLKVIREVSR (97 aa). Phosphoserine is present on residues Ser-328 and Ser-342. Positions 341-381 are disordered; it reads LSQEKQNSDSDSLGMNDSSSTLSRREACEHGKGKKNSLAEL. The span at 349 to 362 shows a compositional bias: polar residues; it reads DSDSLGMNDSSSTL. The PH 2 domain maps to 417–511; sequence EAPCCGYLNV…WLGLLLVEMG (95 aa). Tyr-556 carries the phosphotyrosine modification. Positions 563-605 are disordered; that stretch reads KVQDEEPQRPTGAQVKRHASSCSEKSHRADPQVKVKRHASSAN. The span at 586–595 shows a compositional bias: basic and acidic residues; sequence EKSHRADPQV. Residues 610–700 adopt a coiled-coil conformation; it reads GKNRAEEDAR…AVKERLQQSL (91 aa). Residues 704–767 are disordered; it reads PALGLSVSSK…KAKEWEMKKT (64 aa). Residues 709–733 show a composition bias toward polar residues; sequence SVSSKSKSQETTNKPQSSVPEQSLP. The residue at position 746 (Ser-746) is a Phosphoserine. Residues 758–767 are compositionally biased toward basic and acidic residues; it reads KAKEWEMKKT.

In terms of assembly, interacts with CTTN.

It localises to the cytoplasm. Its subcellular location is the cell projection. It is found in the podosome. The protein resides in the invadopodium. Its function is as follows. May be involved in podosome and invadosome formation. The polypeptide is Actin filament-associated protein 1-like 1 (Afap1l1) (Rattus norvegicus (Rat)).